Consider the following 89-residue polypeptide: Small ribosomal subunit protein uS15 (89 aa).

This sequence belongs to the universal ribosomal protein uS15 family. As to quaternary structure, part of the 30S ribosomal subunit. Forms a bridge to the 50S subunit in the 70S ribosome, contacting the 23S rRNA.

One of the primary rRNA binding proteins, it binds directly to 16S rRNA where it helps nucleate assembly of the platform of the 30S subunit by binding and bridging several RNA helices of the 16S rRNA. Its function is as follows. Forms an intersubunit bridge (bridge B4) with the 23S rRNA of the 50S subunit in the ribosome. This is Small ribosomal subunit protein uS15 from Nostoc sp. (strain PCC 7120 / SAG 25.82 / UTEX 2576).